The primary structure comprises 1170 residues: Cellulose synthase-like protein D2 (1170 aa).

3 disordered regions span residues 1–48 (MASS…RRTH), 54–73 (SYSRDDLDSELGNSGDMSPE), and 269–295 (NEVDNGGGGGGGGGLGGGDGQPAEFTS). A compositionally biased stretch (low complexity) spans 10 to 24 (RHSNSSRLSRMSYSG). Residues 273-288 (NGGGGGGGGGLGGGDG) are compositionally biased toward gly residues. A run of 2 helical transmembrane segments spans residues 311–331 (VLSPYRLLILIRMAVLGLFLA) and 341–361 (AMWLWGMSVVCELWFGLSWLL). D441 is an active-site residue. Positions 527-551 (HAREEIKAMKRQREAALDDVVEAVK) form a coiled coil. D873 is a catalytic residue. 6 helical membrane passes run 955–975 (IFLIVYCFLPALSLFSGQFIV), 981–1001 (TFLTYLLVITLTMCMLAVLEI), 1027–1047 (LAAVLQGLLKVIAGIEISFTL), 1070–1090 (SLMIPPIVIMMVNLIAIAVGF), 1104–1124 (LLGGVFFSFWVLAHLYPFAKG), and 1134–1154 (TIVFVWSGLLAITISLLWVAI).

The protein belongs to the glycosyltransferase 2 family. Plant cellulose synthase-like D subfamily.

The protein resides in the golgi apparatus membrane. Thought to be a Golgi-localized beta-glycan synthase that polymerize the backbones of noncellulosic polysaccharides (hemicelluloses) of plant cell wall. The polypeptide is Cellulose synthase-like protein D2 (CSLD2) (Oryza sativa subsp. japonica (Rice)).